A 399-amino-acid chain; its full sequence is Glycerate 2-kinase (399 aa).

Lys48 is a substrate binding site.

Belongs to the glycerate kinase type-1 family. In terms of assembly, homodimer. It depends on Mg(2+) as a cofactor. Ni(2+) serves as cofactor. The cofactor is Mn(2+). Co(2+) is required as a cofactor. Requires Ca(2+) as cofactor. It depends on Zn(2+) as a cofactor. Sr(2+) serves as cofactor.

It catalyses the reaction (R)-glycerate + ATP = (2R)-2-phosphoglycerate + ADP + H(+). In terms of biological role, catalyzes the ATP-dependent phosphorylation of D-glycerate to 2-phosphoglycerate. It can also utilize GTP, CTP, UTP, ADP, AMP or pyrophosphate as phosphate donor. The polypeptide is Glycerate 2-kinase (gck) (Sulfurisphaera tokodaii (strain DSM 16993 / JCM 10545 / NBRC 100140 / 7) (Sulfolobus tokodaii)).